The sequence spans 240 residues: Dihydromonapterin reductase (240 aa).

Y152 serves as the catalytic Proton acceptor.

This sequence belongs to the short-chain dehydrogenases/reductases (SDR) family. FolM subfamily.

The catalysed reaction is (6S)-5,6,7,8-tetrahydrofolate + NADP(+) = 7,8-dihydrofolate + NADPH + H(+). It carries out the reaction 7,8-dihydromonapterin + NADPH + H(+) = 5,6,7,8-tetrahydromonapterin + NADP(+). In terms of biological role, catalyzes the reduction of dihydromonapterin to tetrahydromonapterin. Also has lower activity with dihydrofolate. This is Dihydromonapterin reductase (folM) from Shigella sonnei (strain Ss046).